Reading from the N-terminus, the 463-residue chain is Nitrate/nitrite antiporter NarK (463 aa).

Residues 1-37 are Cytoplasmic-facing; it reads MSHSSAPERATGAVITDWRPEDPAFWQQRGQRIASRN. Residues 38-59 traverse the membrane as a helical segment; it reads LWISVPCLLLAFCVWMLFSAVA. Residues 60–73 lie on the Periplasmic side of the membrane; that stretch reads VNLPKVGFNFTTDQ. Residues 74-95 form a helical membrane-spanning segment; the sequence is LFMLTALPSVSGALLRVPYSFM. Arginine 89 contributes to the nitrate binding site. Residue arginine 89 coordinates nitrite. Residues 96–102 lie on the Cytoplasmic side of the membrane; it reads VPIFGGR. A helical transmembrane segment spans residues 103–122; sequence RWTAFSTGILIIPCVWLGFA. The Periplasmic segment spans residues 123–130; that stretch reads VQDTSTPY. Residues 131 to 151 form a helical membrane-spanning segment; that stretch reads SVFIIISLLCGFAGANFASSM. Topologically, residues 152–166 are cytoplasmic; sequence ANISFFFPKQKQGGA. The helical transmembrane segment at 167–189 threads the bilayer; sequence LGLNGGLGNMGVSVMQLVAPLVV. Asparagine 175 is a nitrate binding site. Residues 190-211 lie on the Periplasmic side of the membrane; the sequence is SLSIFAVFGSQGVKQPDGTELY. The chain crosses the membrane as a helical span at residues 212–233; that stretch reads LANASWIWVPFLAIFTIAAWFG. Over 234–253 the chain is Cytoplasmic; that stretch reads MNDLATSKASIKEQLPVLKR. Residues 254–281 form a helical membrane-spanning segment; that stretch reads GHLWIMSLLYLATFGSFIGFSAGFAMLS. Tyrosine 263 contributes to the nitrate binding site. Tyrosine 263 lines the nitrite pocket. Topologically, residues 282–289 are periplasmic; it reads KTQFPDVQ. A helical membrane pass occupies residues 290 to 312; sequence ILQYAFFGPFIGALARSAGGALS. Over 313–316 the chain is Cytoplasmic; it reads DRLG. A helical transmembrane segment spans residues 317 to 338; it reads GTRVTLVNFILMAIFSGLLFLT. Residues 339-347 are Periplasmic-facing; sequence LPTDGQGGS. Residues 348-373 traverse the membrane as a helical segment; that stretch reads FMAFFAVFLALFLTAGLGSGSTFQMI. Topologically, residues 374–405 are cytoplasmic; it reads SVIFRKLTMDRVKAEGGSDERAMREAATDTAA. The chain crosses the membrane as a helical span at residues 406 to 427; that stretch reads ALGFISAIGAIGGFFIPKAFGS. Serine 411 contributes to the nitrate binding site. Residues 428–435 lie on the Periplasmic side of the membrane; that stretch reads SLALTGSP. Residues 436 to 458 form a helical membrane-spanning segment; it reads VGAMKVFLIFYIACVVITWAVYG. The Cytoplasmic segment spans residues 459-463; that stretch reads RHSKK.

Belongs to the major facilitator superfamily. Nitrate/nitrite porter (TC 2.A.1.8) family.

The protein resides in the cell inner membrane. The catalysed reaction is nitrate(in) + nitrite(out) = nitrate(out) + nitrite(in). In terms of biological role, catalyzes nitrate uptake, nitrite uptake and nitrite export across the cytoplasmic membrane. Functions as a nitrate/nitrite exchanger, and protons are unlikely to be co-transported. The polypeptide is Nitrate/nitrite antiporter NarK (Escherichia coli (strain K12)).